A 370-amino-acid chain; its full sequence is MKSGRFIGVMSGTSLDGVDVVLAAIDERMVAQQASYTHPIPLQLKKDILGMCQGQSTTLSAVGKLDAQLGILFAEAVLALLAKEGLSAQDITAIGCHGQTVWHEPLGEPAFTMQLGDNNRIAAMTQIATVGDFRRRDMAYGGQGAPLVPAFHHALLAHATEKRMVLNIGGIANLSVLLPDSPIRGFDTGPGNMLMDAWIWRNCSLPYDKDACWALSGHVNQPLLEQMFNDPYFRLPAPKSTGREYFNAAWLDKQLARIPGVTAEDIQATLAELTAVSITEQVRLAGGCDRLLVCGGGARNPLVMARISALLSGTEVCTTDDAGIRGDDMEALAFAWLAFRTLSGKPGNLPSVTGASRETILGAVHPVSSW.

An ATP-binding site is contributed by 12 to 19; that stretch reads GTSLDGVD.

It belongs to the anhydro-N-acetylmuramic acid kinase family.

It catalyses the reaction 1,6-anhydro-N-acetyl-beta-muramate + ATP + H2O = N-acetyl-D-muramate 6-phosphate + ADP + H(+). The protein operates within amino-sugar metabolism; 1,6-anhydro-N-acetylmuramate degradation. It participates in cell wall biogenesis; peptidoglycan recycling. In terms of biological role, catalyzes the specific phosphorylation of 1,6-anhydro-N-acetylmuramic acid (anhMurNAc) with the simultaneous cleavage of the 1,6-anhydro ring, generating MurNAc-6-P. Is required for the utilization of anhMurNAc either imported from the medium or derived from its own cell wall murein, and thus plays a role in cell wall recycling. This Yersinia pseudotuberculosis serotype O:1b (strain IP 31758) protein is Anhydro-N-acetylmuramic acid kinase.